The chain runs to 513 residues: Histidine ammonia-lyase (513 aa).

Positions Ala-143–Gly-145 form a cross-link, 5-imidazolinone (Ala-Gly). Ser-144 is modified (2,3-didehydroalanine (Ser)).

The protein belongs to the PAL/histidase family. In terms of processing, contains an active site 4-methylidene-imidazol-5-one (MIO), which is formed autocatalytically by cyclization and dehydration of residues Ala-Ser-Gly.

The protein localises to the cytoplasm. The catalysed reaction is L-histidine = trans-urocanate + NH4(+). It participates in amino-acid degradation; L-histidine degradation into L-glutamate; N-formimidoyl-L-glutamate from L-histidine: step 1/3. This chain is Histidine ammonia-lyase, found in Paracoccus denitrificans (strain Pd 1222).